The sequence spans 141 residues: Nucleoside diphosphate kinase (141 aa).

ATP contacts are provided by lysine 11, phenylalanine 59, arginine 87, threonine 93, arginine 104, and asparagine 114. Histidine 117 (pros-phosphohistidine intermediate) is an active-site residue.

Belongs to the NDK family. Homotetramer. The cofactor is Mg(2+).

The protein localises to the cytoplasm. It carries out the reaction a 2'-deoxyribonucleoside 5'-diphosphate + ATP = a 2'-deoxyribonucleoside 5'-triphosphate + ADP. It catalyses the reaction a ribonucleoside 5'-diphosphate + ATP = a ribonucleoside 5'-triphosphate + ADP. Its function is as follows. Major role in the synthesis of nucleoside triphosphates other than ATP. The ATP gamma phosphate is transferred to the NDP beta phosphate via a ping-pong mechanism, using a phosphorylated active-site intermediate. The chain is Nucleoside diphosphate kinase from Xanthomonas axonopodis pv. citri (strain 306).